We begin with the raw amino-acid sequence, 98 residues long: UPF0213 protein BPUM_0019 (98 aa).

Residues 4–79 (HNHYFYVLKC…KTWTRKKKDL (76 aa)) form the GIY-YIG domain.

Belongs to the UPF0213 family.

The chain is UPF0213 protein BPUM_0019 from Bacillus pumilus (strain SAFR-032).